A 379-amino-acid chain; its full sequence is Protein RecA (379 aa).

Residues Met1–Ser14 show a composition bias toward low complexity. The segment at Met1–Glu24 is disordered. Gly84–Thr91 is a binding site for ATP.

The protein belongs to the RecA family.

It localises to the cytoplasm. Its function is as follows. Can catalyze the hydrolysis of ATP in the presence of single-stranded DNA, the ATP-dependent uptake of single-stranded DNA by duplex DNA, and the ATP-dependent hybridization of homologous single-stranded DNAs. It interacts with LexA causing its activation and leading to its autocatalytic cleavage. The chain is Protein RecA from Prochlorococcus marinus (strain SARG / CCMP1375 / SS120).